Consider the following 194-residue polypeptide: Holliday junction branch migration complex subunit RuvA (194 aa).

Residues 1–64 (MIGRLRGVLT…DDSAALYGFL (64 aa)) form a domain I region. Residues 65-140 (SESERRLFRH…RAADFNNGIS (76 aa)) form a domain II region. The interval 140-144 (STSGK) is flexible linker. Residues 145–194 (LNLDTVSEAALALQQLGYKPAEAARMARDAGTESDDVAIVIKKALQTVLR) form a domain III region.

It belongs to the RuvA family. In terms of assembly, homotetramer. Forms an RuvA(8)-RuvB(12)-Holliday junction (HJ) complex. HJ DNA is sandwiched between 2 RuvA tetramers; dsDNA enters through RuvA and exits via RuvB. An RuvB hexamer assembles on each DNA strand where it exits the tetramer. Each RuvB hexamer is contacted by two RuvA subunits (via domain III) on 2 adjacent RuvB subunits; this complex drives branch migration. In the full resolvosome a probable DNA-RuvA(4)-RuvB(12)-RuvC(2) complex forms which resolves the HJ.

It is found in the cytoplasm. In terms of biological role, the RuvA-RuvB-RuvC complex processes Holliday junction (HJ) DNA during genetic recombination and DNA repair, while the RuvA-RuvB complex plays an important role in the rescue of blocked DNA replication forks via replication fork reversal (RFR). RuvA specifically binds to HJ cruciform DNA, conferring on it an open structure. The RuvB hexamer acts as an ATP-dependent pump, pulling dsDNA into and through the RuvAB complex. HJ branch migration allows RuvC to scan DNA until it finds its consensus sequence, where it cleaves and resolves the cruciform DNA. The chain is Holliday junction branch migration complex subunit RuvA from Xylella fastidiosa (strain M23).